The chain runs to 536 residues: Membrane protein insertase YidC (536 aa).

A helical membrane pass occupies residues 5–25 (ALIAVILSIVFFYGYSALFPP). The interval 30–54 (APAPSAQQAVTGSQPGAPQASVAAV) is disordered. Over residues 31–54 (PAPSAQQAVTGSQPGAPQASVAAV) the composition is skewed to low complexity. Helical transmembrane passes span 350-370 (YGIA…PLTH), 420-440 (LPML…MFSI), 454-474 (LAGK…MVIQ), and 494-514 (PVVF…YWLV).

This sequence belongs to the OXA1/ALB3/YidC family. Type 1 subfamily. Interacts with the Sec translocase complex via SecD. Specifically interacts with transmembrane segments of nascent integral membrane proteins during membrane integration.

Its subcellular location is the cell inner membrane. Functionally, required for the insertion and/or proper folding and/or complex formation of integral membrane proteins into the membrane. Involved in integration of membrane proteins that insert both dependently and independently of the Sec translocase complex, as well as at least some lipoproteins. Aids folding of multispanning membrane proteins. This is Membrane protein insertase YidC from Geobacter metallireducens (strain ATCC 53774 / DSM 7210 / GS-15).